The following is a 92-amino-acid chain: MADLEKINKIKVAEHIVECFGGIKNIKNIDKDLTRIKILVDSNSLVKRDDLTKNDNIIGTIKSNELTEVVINFEIIEDVYNKILYMMNEQKQ.

The region spanning 10 to 92 (IKVAEHIVEC…ILYMMNEQKQ (83 aa)) is the PTS EIIB type-1 domain.

The protein localises to the cytoplasm. Its function is as follows. The phosphoenolpyruvate-dependent sugar phosphotransferase system (PTS), a major carbohydrate active -transport system, catalyzes the phosphorylation of incoming sugar substrates concomitant with their translocation across the cell membrane. The protein is Putative phosphotransferase enzyme IIB component BB_0367 of Borreliella burgdorferi (strain ATCC 35210 / DSM 4680 / CIP 102532 / B31) (Borrelia burgdorferi).